The following is a 382-amino-acid chain: Succinate--CoA ligase [ADP-forming] subunit beta (382 aa).

Residues 9-240 (KELFAKYGVK…PRDITEFEAY (232 aa)) enclose the ATP-grasp domain. Residues Lys-45, 52-54 (GRG), Leu-94, and Glu-99 contribute to the ATP site. Asn-193 and Asp-207 together coordinate Mg(2+). Substrate-binding positions include Asn-260 and 317–319 (GIT).

This sequence belongs to the succinate/malate CoA ligase beta subunit family. In terms of assembly, heterotetramer of two alpha and two beta subunits. Mg(2+) serves as cofactor.

It carries out the reaction succinate + ATP + CoA = succinyl-CoA + ADP + phosphate. The catalysed reaction is GTP + succinate + CoA = succinyl-CoA + GDP + phosphate. The protein operates within carbohydrate metabolism; tricarboxylic acid cycle; succinate from succinyl-CoA (ligase route): step 1/1. In terms of biological role, succinyl-CoA synthetase functions in the citric acid cycle (TCA), coupling the hydrolysis of succinyl-CoA to the synthesis of either ATP or GTP and thus represents the only step of substrate-level phosphorylation in the TCA. The beta subunit provides nucleotide specificity of the enzyme and binds the substrate succinate, while the binding sites for coenzyme A and phosphate are found in the alpha subunit. The sequence is that of Succinate--CoA ligase [ADP-forming] subunit beta from Pyrobaculum calidifontis (strain DSM 21063 / JCM 11548 / VA1).